Reading from the N-terminus, the 271-residue chain is D-methionine-binding lipoprotein MetQ (271 aa).

Positions Met-1–Gly-22 are cleaved as a signal peptide. A lipid anchor (N-palmitoyl cysteine) is attached at Cys-23. Residue Cys-23 is the site of S-diacylglycerol cysteine attachment.

Belongs to the NlpA lipoprotein family.

Its subcellular location is the cell membrane. Its function is as follows. This protein is a component of a D-methionine permease, a binding protein-dependent, ATP-driven transport system. This is D-methionine-binding lipoprotein MetQ (metQ) from Salmonella typhi.